The sequence spans 485 residues: Glutamyl-tRNA(Gln) amidotransferase subunit A (485 aa).

Active-site charge relay system residues include Lys76 and Ser151. Residue Ser175 is the Acyl-ester intermediate of the active site.

This sequence belongs to the amidase family. GatA subfamily. As to quaternary structure, heterotrimer of A, B and C subunits.

The enzyme catalyses L-glutamyl-tRNA(Gln) + L-glutamine + ATP + H2O = L-glutaminyl-tRNA(Gln) + L-glutamate + ADP + phosphate + H(+). Its function is as follows. Allows the formation of correctly charged Gln-tRNA(Gln) through the transamidation of misacylated Glu-tRNA(Gln) in organisms which lack glutaminyl-tRNA synthetase. The reaction takes place in the presence of glutamine and ATP through an activated gamma-phospho-Glu-tRNA(Gln). This is Glutamyl-tRNA(Gln) amidotransferase subunit A from Methylococcus capsulatus (strain ATCC 33009 / NCIMB 11132 / Bath).